The following is a 136-amino-acid chain: Ribosome-binding factor A (136 aa).

Belongs to the RbfA family. As to quaternary structure, monomer. Binds 30S ribosomal subunits, but not 50S ribosomal subunits or 70S ribosomes.

It is found in the cytoplasm. One of several proteins that assist in the late maturation steps of the functional core of the 30S ribosomal subunit. Associates with free 30S ribosomal subunits (but not with 30S subunits that are part of 70S ribosomes or polysomes). Required for efficient processing of 16S rRNA. May interact with the 5'-terminal helix region of 16S rRNA. The sequence is that of Ribosome-binding factor A from Cellvibrio japonicus (strain Ueda107) (Pseudomonas fluorescens subsp. cellulosa).